Here is a 1954-residue protein sequence, read N- to C-terminus: MGNSYAGQLKSTRFEEVLHNSIEASLRSNTLVPRPIFSQLYLEAEQQLSSLEGGSRADNEEEEEDGEGGLEPSSPPNAYQLPPPPEGCCTTDGFCQAGKDLRLVSISSEPIEVPAGFLLVGAKSPSLPDHLLVCAVDKRFLPDDNGHNALLGFSGNCVGCGKKGFCYFTEFSNHINLKLTTQPKKQKHLKYYLVRNAQGALTKGPLICWKGSEFRGRQNSTNTCSSSLFPPLESSGSLAAFPTEPVPGTNPSVPVGAQQAGPASDHPSVTTATGPAVFNGKDSPKHPQLVKSSLSALPRPSALGILPNSGPPKKRHKGWSPESKSTTDGGFIQGGGNRAKHEGTSIPCVPQAGLVGPASVTFPVVASGEPVSVPDNLLKICKAKPVIFKGHGNFPYLCGNLNDVVVSPLLYTCYQNSQSLARAYEQHGASTMQPISEETQLLLTVYYLVQLAADQVPLMEDLEQIFLRSWRESHLTEIRQYQQAPPQPFPPATSTAAPVTSAQLPWLAGLAASSCNDSVHVIECAYSLAEGLSEMFRLLIEGKLSKTNYVVIICACRNAAIDSCIAVTGKYQARILSESLLSPAEYQREVHYELVTGKVDSLGTFFSSLCPEGDIDILLDKFHQENQGHVSSSFTASSTKKTAVLDASGVPVCTSYHQEPRGVRPFQLAVAQKLLSHVCSIADSSTQNLDLGSFEKVDFLICIPPSEVTYQQTVFHVWHSGVLLELGLEKEPVTKQRAEQHVLKLDTEAQARFKAFLQNSFQNPHTLFVLIHDHAHWDLVSSAVHNIYSQSDPSVGLVDRLLNCREVKEAPNIVTLHVTSFPYALQTQHTLISPYNEIHWPISFSNGVDLYHESKKYFGLSEFIDSTLSGHSLPLLRYDSSFEAMVTALGKRFPRLHSAVIRTFVLVQHYAAAMMAVSGLPQMKNHTSVETLEITQNLLNSPKQCPCGHGLMVLLRVPCSPLAAVAYERLAHVRARLALEEHFEIILGHPSSGITVGKHFVKQLKMWQKIEDAEWRPQTYLELEGLPCILIFSGMDPHGESLPRSLRYCDLRLINSSCLVRTALEQELGLAAYFVSNDIPLEKGPKNEALESDGEKLSSTDEDEEAGTEGCFEAGSTSEQRGPVKRERSHSHDSASSSLSSRASGSVLYGESLAQPSGPPQGELTRSPPSCGPAEEGRAPGEIQRLRVSQGSTVISRHSPGLVPQPDSSLRTGRRSLQVPAAPSSQLSSSSGSSSTCAVPTANVLVLQASQCSMAKACRQPPIVFLPKLVYDMLLSTDSSGLPKSASLLPSPSVMWTSSFRPLLSKMMTSTEQSLYYRQWTVPRPSHMDYGNRAEGRVDSFHPRRLLLSGPPQIGKTGAYLQFLSILSRMLIRLTEVDVYDEEEINTSFREESEWRYLQLADPWPDLELFQKMPFDYIIHDPKYEDASLICSHPQTIKSEDRGMSRKPEDLYVRRQTARMRLSKYAAYNTYHHCEQCQQYMGFHPHYQLSESTLHVFAFSCSMLGEEVQLHFIIPKSKEHHFVFSQPGGQLESMRLPLVTDKSHEHIKSPTFTPTTGRHEHGLFNLYHAMDGANHLHVLVVKEYEMAIYKKYWPNHIMLVLPSIFNSAGVGAAHFLIKELCYHNLELERNRQEELGVKPQDVWPFIVIADDSCVMWNVADVDCAGERSREFSWSERNVSLKYIMLHIEASPNITHYALLGMRKWASKTRGREVQEPFSRCHVHDFIILNVDLTQNVQYNQNRFTCDDVDFNLRVHSAGLLLCRFNRFSVMKKQIAVGGHRSFHITSKVSDSSVAIVPSQYICAPDSKHTFLAAPAQLLLEKFLQYHSHRFFPLSLKNHSHPVLSVDCYLNLGPQISVCYVSSRPHSLNISCSDMVFSGLLLYLCDSFVGASFLKKFHFLKGATLCVICQDRNSLRQTVVRLELEDEWQFRLRDEFQTANAKEDRPLFFLTARHI.

Disordered regions lie at residues 48 to 83 (LSSL…QLPP), 238 to 342 (LAAF…AKHE), and 1083 to 1235 (KGPK…GSSS). A compositionally biased stretch (acidic residues) spans 59–68 (NEEEEEDGEG). Over residues 292 to 303 (SSLSALPRPSAL) the composition is skewed to low complexity. Basic and acidic residues-rich tracts occupy residues 1083-1099 (KGPK…KLSS) and 1122-1133 (GPVKRERSHSHD). Residues 1134–1146 (SASSSLSSRASGS) are compositionally biased toward low complexity. Residues 1187 to 1196 (RVSQGSTVIS) show a composition bias toward polar residues. The segment covering 1224–1235 (SSQLSSSSGSSS) has biased composition (low complexity). The chain crosses the membrane as a helical span at residues 1873–1893 (DMVFSGLLLYLCDSFVGASFL).

The protein belongs to the GREB1 family.

It is found in the membrane. In terms of biological role, may play a role in estrogen-stimulated cell proliferation. This Mus musculus (Mouse) protein is Protein GREB1 (Greb1).